The primary structure comprises 380 residues: Cytochrome b (380 aa).

Transmembrane regions (helical) follow at residues 34–54, 78–99, 114–134, and 179–199; these read FGSL…LLAM, WLIR…YMHI, WNTG…GYVL, and FFAL…IHLT. Positions 84 and 98 each coordinate heme b. 2 residues coordinate heme b: histidine 183 and histidine 197. Histidine 202 lines the a ubiquinone pocket. Transmembrane regions (helical) follow at residues 227 to 247, 289 to 309, 321 to 341, and 348 to 368; these read LKDI…ALFS, LGGV…PLLH, LSQL…WIGS, and FIII…ILFP.

This sequence belongs to the cytochrome b family. The cytochrome bc1 complex contains 11 subunits: 3 respiratory subunits (MT-CYB, CYC1 and UQCRFS1), 2 core proteins (UQCRC1 and UQCRC2) and 6 low-molecular weight proteins (UQCRH/QCR6, UQCRB/QCR7, UQCRQ/QCR8, UQCR10/QCR9, UQCR11/QCR10 and a cleavage product of UQCRFS1). This cytochrome bc1 complex then forms a dimer. Heme b is required as a cofactor.

The protein resides in the mitochondrion inner membrane. Functionally, component of the ubiquinol-cytochrome c reductase complex (complex III or cytochrome b-c1 complex) that is part of the mitochondrial respiratory chain. The b-c1 complex mediates electron transfer from ubiquinol to cytochrome c. Contributes to the generation of a proton gradient across the mitochondrial membrane that is then used for ATP synthesis. This Hydrobates pelagicus (European storm-petrel) protein is Cytochrome b (MT-CYB).